We begin with the raw amino-acid sequence, 247 residues long: Small ribosomal subunit protein uS3 (247 aa).

The KH type-2 domain maps to 39 to 107; the sequence is VRDYLRKKLD…PAQVNIEEIT (69 aa). Residues 213–247 form a disordered region; the sequence is SVYNPPKEDKTRAPKRRGRSNSNRRNSDRANTDRG. Basic and acidic residues predominate over residues 237–247; the sequence is RNSDRANTDRG.

Belongs to the universal ribosomal protein uS3 family. As to quaternary structure, part of the 30S ribosomal subunit. Forms a tight complex with proteins S10 and S14.

In terms of biological role, binds the lower part of the 30S subunit head. Binds mRNA in the 70S ribosome, positioning it for translation. This chain is Small ribosomal subunit protein uS3, found in Psychrobacter sp. (strain PRwf-1).